Reading from the N-terminus, the 233-residue chain is Ribosomal RNA small subunit methyltransferase G (233 aa).

Residues 1 to 25 (MASRQSPMAVSQPDHADRSAALQLT) form a disordered region. S-adenosyl-L-methionine is bound by residues Gly85, Phe90, and Arg155.

This sequence belongs to the methyltransferase superfamily. RNA methyltransferase RsmG family.

Its subcellular location is the cytoplasm. It carries out the reaction guanosine(527) in 16S rRNA + S-adenosyl-L-methionine = N(7)-methylguanosine(527) in 16S rRNA + S-adenosyl-L-homocysteine. Functionally, specifically methylates the N7 position of guanine in position 527 of 16S rRNA. This chain is Ribosomal RNA small subunit methyltransferase G, found in Rhodopseudomonas palustris (strain BisB5).